We begin with the raw amino-acid sequence, 289 residues long: Bifunctional protein FolD (289 aa).

Residues 166–168 (GVS) and isoleucine 232 contribute to the NADP(+) site.

This sequence belongs to the tetrahydrofolate dehydrogenase/cyclohydrolase family. In terms of assembly, homodimer.

It carries out the reaction (6R)-5,10-methylene-5,6,7,8-tetrahydrofolate + NADP(+) = (6R)-5,10-methenyltetrahydrofolate + NADPH. It catalyses the reaction (6R)-5,10-methenyltetrahydrofolate + H2O = (6R)-10-formyltetrahydrofolate + H(+). It participates in one-carbon metabolism; tetrahydrofolate interconversion. Its function is as follows. Catalyzes the oxidation of 5,10-methylenetetrahydrofolate to 5,10-methenyltetrahydrofolate and then the hydrolysis of 5,10-methenyltetrahydrofolate to 10-formyltetrahydrofolate. In Methylobacillus flagellatus (strain ATCC 51484 / DSM 6875 / VKM B-1610 / KT), this protein is Bifunctional protein FolD.